The sequence spans 149 residues: Transcriptional repressor NrdR (149 aa).

The segment at 3–34 (CPFCGHLETQVVETRISEDAEFIRRRRQCGAC) is a zinc-finger region. One can recognise an ATP-cone domain in the interval 49 to 139 (PSIVKKDGRR…VYRSFEDIDE (91 aa)).

It belongs to the NrdR family. The cofactor is Zn(2+).

In terms of biological role, negatively regulates transcription of bacterial ribonucleotide reductase nrd genes and operons by binding to NrdR-boxes. The protein is Transcriptional repressor NrdR of Polaromonas naphthalenivorans (strain CJ2).